Here is a 323-residue protein sequence, read N- to C-terminus: MLPFKKADSPFKSNPVSRVGSSTRLNQLGNIKSNPTTPNAALYVTSSLNPSKNLPTNAANVKSRLQTQKDLDAFKQLPMVQKVNEYERLLNELSEAVSQFKNDELQEKIGQIITCNDVLKQQIEDLNKHRNYSYEVDKLSDRNKILEENSKFILKELVSYRNELKKLPKLPKSDKMVNRNVDVDDILKYAFKLAKFTKAPATVANMPFQIHPNNYVWPAEDSLRRGMLAQASLQAEEIIRHELGETDKENSNEVKTESKVDHDDDDDDEMEDVRISNENTNDEQRSKPPAASEHDTSKRKEEQNQQPVDLNLDLFDPDDEYSD.

The tract at residues 1–36 (MLPFKKADSPFKSNPVSRVGSSTRLNQLGNIKSNPT) is disordered. The span at 11 to 36 (FKSNPVSRVGSSTRLNQLGNIKSNPT) shows a compositional bias: polar residues. Residues 79-167 (MVQKVNEYER…VSYRNELKKL (89 aa)) adopt a coiled-coil conformation. 2 stretches are compositionally biased toward basic and acidic residues: residues 241-262 (HELG…KVDH) and 282-303 (DEQR…KEEQ). Positions 241–323 (HELGETDKEN…LFDPDDEYSD (83 aa)) are disordered.

The protein belongs to the Mediator complex subunit 4 family. As to quaternary structure, component of the Mediator complex.

It localises to the nucleus. Its function is as follows. Component of the Mediator complex, a coactivator involved in the regulated transcription of nearly all RNA polymerase II-dependent genes. Mediator functions as a bridge to convey information from gene-specific regulatory proteins to the basal RNA polymerase II transcription machinery. Mediator is recruited to promoters by direct interactions with regulatory proteins and serves as a scaffold for the assembly of a functional preinitiation complex with RNA polymerase II and the general transcription factors. This is Mediator of RNA polymerase II transcription subunit 4 (MED4) from Candida albicans (strain SC5314 / ATCC MYA-2876) (Yeast).